We begin with the raw amino-acid sequence, 905 residues long: Gamma-tubulin complex component 2 (905 aa).

Position 83 is a phosphotyrosine (Tyr83). The tract at residues 877–905 (AERSQKAAPQVPVPRGPSAPAPRVAIPAQ) is disordered. Over residues 887 to 896 (VPVPRGPSAP) the composition is skewed to pro residues.

Belongs to the TUBGCP family. Component of the gamma-tubulin ring complex (gTuRC) consisting of TUBGCP2, TUBGCP3, TUBGCP4, TUBGCP5 and TUBGCP6 and gamma-tubulin TUBG1 or TUBG2. TUBGCP2, TUBGCP3, TUBGCP4, TUBGCP5 and TUBGCP6 assemble in a 5:5:2:1:1 stoichiometry; each is associated with a gamma-tubulin, thereby arranging 14 gamma-tubulins in a helical manner. Gamma-tubulin at the first position is blocked by TUBGCP3 at the last position, allowing 13 protafilaments to grow into a microtubule. The gTuRC (via TUBGCP3 and TUBGCP6) interacts with ACTB and MZT1; the interactions form a luminal bridge that stabilizes the initial structure during complex assembly. The gTuRC (via TUBGCP2) interacts with MZT2A/MZT2B and CDK5RAP2 (via CM1 motif); the interactions play a role in gTuRC activation. Interacts with ATF5; the ATF5:PCNT:polyglutamylated tubulin (PGT) tripartite unites the mother centriole and the pericentriolar material (PCM) in the centrosome.

The protein localises to the cytoplasm. It localises to the cytoskeleton. Its subcellular location is the microtubule organizing center. It is found in the centrosome. Functionally, component of the gamma-tubulin ring complex (gTuRC) which mediates microtubule nucleation. The gTuRC regulates the minus-end nucleation of alpha-beta tubulin heterodimers that grow into microtubule protafilaments, a critical step in centrosome duplication and spindle formation. Plays a role in neuronal migration. The polypeptide is Gamma-tubulin complex component 2 (Tubgcp2) (Mus musculus (Mouse)).